Consider the following 122-residue polypeptide: Large ribosomal subunit protein bL12 (122 aa).

This sequence belongs to the bacterial ribosomal protein bL12 family. Homodimer. Part of the ribosomal stalk of the 50S ribosomal subunit. Forms a multimeric L10(L12)X complex, where L10 forms an elongated spine to which 2 to 4 L12 dimers bind in a sequential fashion. Binds GTP-bound translation factors.

Forms part of the ribosomal stalk which helps the ribosome interact with GTP-bound translation factors. Is thus essential for accurate translation. The chain is Large ribosomal subunit protein bL12 from Acinetobacter baumannii (strain AB0057).